We begin with the raw amino-acid sequence, 356 residues long: Cytochrome c oxidase subunit 2 (356 aa).

The N-terminal stretch at 1-20 (MVKHWRLILLLALVPLLLSG) is a signal peptide. A lipid anchor (N-palmitoyl cysteine) is attached at Cys21. Cys21 carries S-diacylglycerol cysteine lipidation. The Extracellular portion of the chain corresponds to 21–47 (CGKPFLSTLKPAGEVADKQYDLTVLST). The segment at 21-257 (CGKPFLSTLK…KNYKSTAESD (237 aa)) is cytochrome c oxidase subunit II. A helical transmembrane segment spans residues 48-66 (LIMVVVVAVVSVIFFYVIV). The Cytoplasmic portion of the chain corresponds to 67–87 (RFRRSRVGENTIPKQVEGNKF). The chain crosses the membrane as a helical span at residues 88 to 106 (LEITWTVIPILLLIILVIP). Residues 107–356 (VVLYTLELAD…YLKGLKAESK (250 aa)) lie on the Extracellular side of the membrane. Cu cation-binding residues include His176, Cys217, Cys221, and His225. The Cytochrome c domain occupies 258 to 356 (LAKQGEELFK…YLKGLKAESK (99 aa)). Heme c-binding residues include Cys271, Cys274, His275, and Met329.

This sequence belongs to the cytochrome c oxidase subunit 2 family. Cu cation serves as cofactor. Heme c is required as a cofactor.

The protein localises to the cell membrane. The enzyme catalyses 4 Fe(II)-[cytochrome c] + O2 + 8 H(+)(in) = 4 Fe(III)-[cytochrome c] + 2 H2O + 4 H(+)(out). Its function is as follows. Subunits I and II form the functional core of the enzyme complex. Electrons originating in cytochrome c are transferred via heme a and Cu(A) to the binuclear center formed by heme a3 and Cu(B). The polypeptide is Cytochrome c oxidase subunit 2 (ctaC) (Bacillus subtilis (strain 168)).